The chain runs to 126 residues: Histone H2B 3 (126 aa).

Positions 1-12 (MPEPAKSAPAPK) are enriched in low complexity. The segment at 1–34 (MPEPAKSAPAPKKGSKKAVTKTQKKGDKKRRKTR) is disordered. An N6-acetyllysine mark is found at K6 and K13. Residues 13-34 (KGSKKAVTKTQKKGDKKRRKTR) are compositionally biased toward basic residues. A Phosphoserine modification is found at S15. 2 positions are modified to N6-acetyllysine: K16 and K21. S113 carries O-linked (GlcNAc) serine glycosylation. K121 is covalently cross-linked (Glycyl lysine isopeptide (Lys-Gly) (interchain with G-Cter in ubiquitin)).

It belongs to the histone H2B family. In terms of assembly, the nucleosome is a histone octamer containing two molecules each of H2A, H2B, H3 and H4 assembled in one H3-H4 heterotetramer and two H2A-H2B heterodimers. The octamer wraps approximately 147 bp of DNA. Post-translationally, monoubiquitination of Lys-121 by the BRE1 gives a specific tag for epigenetic transcriptional activation and is also prerequisite for histone H3 'Lys-4' and 'Lys-79' methylation. Phosphorylated on Ser-15 during apoptosis; which facilitates apoptotic chromatin condensation. In terms of processing, glcNAcylation at Ser-113 promotes monoubiquitination of Lys-121. It fluctuates in response to extracellular glucose, and associates with transcribed genes.

The protein resides in the nucleus. It is found in the chromosome. In terms of biological role, core component of nucleosome. Nucleosomes wrap and compact DNA into chromatin, limiting DNA accessibility to the cellular machineries which require DNA as a template. Histones thereby play a central role in transcription regulation, DNA repair, DNA replication and chromosomal stability. DNA accessibility is regulated via a complex set of post-translational modifications of histones, also called histone code, and nucleosome remodeling. The protein is Histone H2B 3 (hist2h2l) of Danio rerio (Zebrafish).